A 325-amino-acid chain; its full sequence is Aldo-keto reductase family 1 member A1 (325 aa).

Alanine 2 is subject to N-acetylalanine. Serine 4 carries the post-translational modification Phosphoserine. NADP(+) contacts are provided by residues 11-20 (GQKMPLIGLG), threonine 21, and tryptophan 22. Position 38 is a phosphoserine (serine 38). Aspartate 45 serves as a coordination point for NADP(+). Tyrosine 50 functions as the Proton donor in the catalytic mechanism. An N6-acetyllysine; alternate modification is found at lysine 127. Residue lysine 127 is modified to N6-succinyllysine; alternate. Lysine 145 bears the N6-succinyllysine mark. NADP(+) is bound by residues serine 162, asparagine 163, serine 211, leucine 213, serine 215, serine 216, lysine 263, serine 264, isoleucine 265, threonine 266, arginine 269, glutamine 272, and asparagine 273. The residue at position 211 (serine 211) is a Phosphoserine.

It belongs to the aldo/keto reductase family.

Its subcellular location is the cytoplasm. It is found in the cytosol. The protein resides in the apical cell membrane. The catalysed reaction is a primary alcohol + NADP(+) = an aldehyde + NADPH + H(+). It carries out the reaction L-gulonate + NADP(+) = aldehydo-D-glucuronate + NADPH + H(+). It catalyses the reaction L-gulono-1,4-lactone + NADP(+) = D-glucurono-3,6-lactone + NADPH + H(+). The enzyme catalyses allyl alcohol + NADP(+) = acrolein + NADPH + H(+). The catalysed reaction is glycerol + NADP(+) = D-glyceraldehyde + NADPH + H(+). It carries out the reaction glycerol + NADP(+) = L-glyceraldehyde + NADPH + H(+). It catalyses the reaction hydroxyacetone + NADP(+) = methylglyoxal + NADPH + H(+). The enzyme catalyses 3-deoxyfructose + NADP(+) = 3-deoxyglucosone + NADPH + H(+). The catalysed reaction is (R)-mevalonate + NADP(+) = (R)-mevaldate + NADPH + H(+). It carries out the reaction pyridine 3-methanol + NADP(+) = pyridine-3-carbaldehyde + NADPH + H(+). It catalyses the reaction S-nitroso-CoA + NADPH + H(+) = sulfinamide-CoA + NADP(+). The enzyme catalyses S-nitrosoglutathione + NADPH + H(+) = S-(hydroxysulfenamide)glutathione + NADP(+). Functionally, catalyzes the NADPH-dependent reduction of a wide variety of carbonyl-containing compounds to their corresponding alcohols. Displays enzymatic activity towards endogenous metabolites such as aromatic and aliphatic aldehydes, ketones, monosaccharides and bile acids, with a preference for negatively charged substrates, such as glucuronate and succinic semialdehyde. Functions as a detoxifiying enzyme by reducing a range of toxic aldehydes. Reduces methylglyoxal and 3-deoxyglucosone, which are present at elevated levels under hyperglycemic conditions and are cytotoxic. Involved also in the detoxification of lipid-derived aldehydes like acrolein. Plays a role in the activation of procarcinogens, such as polycyclic aromatic hydrocarbon trans-dihydrodiols, and in the metabolism of various xenobiotics and drugs. Also acts as an inhibitor of protein S-nitrosylation by mediating degradation of S-nitroso-coenzyme A (S-nitroso-CoA), a cofactor required to S-nitrosylate proteins. S-nitroso-CoA reductase activity is involved in reprogramming intermediary metabolism in renal proximal tubules, notably by inhibiting protein S-nitrosylation of isoform 2 of PKM (PKM2). Also acts as a S-nitroso-glutathione reductase by catalyzing the NADPH-dependent reduction of S-nitrosoglutathione. Displays no reductase activity towards retinoids. The protein is Aldo-keto reductase family 1 member A1 (AKR1A1) of Pongo abelii (Sumatran orangutan).